A 521-amino-acid chain; its full sequence is Solute carrier family 35 member F4 (521 aa).

Helical transmembrane passes span 160-180, 192-212, 248-266, 277-297, 301-321, 330-350, 365-385, 395-417, 419-441, and 450-470; these read MVLK…SWVG, FYCP…FFPV, FLKR…NYLY, DVSA…WIVL, FMGV…MMAY, IIGV…KVLF, FVST…VILY, FAAL…NILV, VGVV…PGNA, and VIFN…FLLM. An EamA domain is found at 261–321; sequence LTNYLYLLAL…AITGIVMMAY (61 aa).

The protein belongs to the SLC35F solute transporter family.

The protein resides in the membrane. Its function is as follows. Putative solute transporter. The polypeptide is Solute carrier family 35 member F4 (SLC35F4) (Homo sapiens (Human)).